Consider the following 469-residue polypeptide: tRNA-2-methylthio-N(6)-dimethylallyladenosine synthase (469 aa).

In terms of domain architecture, MTTase N-terminal spans 22–142; the sequence is RKVFIKTYGC…LPEALRRAKE (121 aa). Cysteine 31, cysteine 67, cysteine 105, cysteine 183, cysteine 187, and cysteine 190 together coordinate [4Fe-4S] cluster. The 233-residue stretch at 169-401 folds into the Radical SAM core domain; that stretch reads RARGVTAFLT…QALLLKQQQE (233 aa). The TRAM domain occupies 404–466; it reads ESCIGKEIDL…TNSLFAERAE (63 aa).

It belongs to the methylthiotransferase family. MiaB subfamily. Monomer. [4Fe-4S] cluster is required as a cofactor.

It is found in the cytoplasm. It carries out the reaction N(6)-dimethylallyladenosine(37) in tRNA + (sulfur carrier)-SH + AH2 + 2 S-adenosyl-L-methionine = 2-methylsulfanyl-N(6)-dimethylallyladenosine(37) in tRNA + (sulfur carrier)-H + 5'-deoxyadenosine + L-methionine + A + S-adenosyl-L-homocysteine + 2 H(+). Functionally, catalyzes the methylthiolation of N6-(dimethylallyl)adenosine (i(6)A), leading to the formation of 2-methylthio-N6-(dimethylallyl)adenosine (ms(2)i(6)A) at position 37 in tRNAs that read codons beginning with uridine. In Rhizobium etli (strain ATCC 51251 / DSM 11541 / JCM 21823 / NBRC 15573 / CFN 42), this protein is tRNA-2-methylthio-N(6)-dimethylallyladenosine synthase.